A 315-amino-acid polypeptide reads, in one-letter code: MKNIIRHFSKPAYREEFKEDTSPRTAEYKSVSEDSSTGLTYTLPPKAKFGKMSIALICFLIVSCNCFASEPLPWQVTFQPPASPIMEELHHFHNFLLYISTAIVLFVAGLLGFVCIRFNAKNNPVPAKFSHNVLIEIIWTVIPIIILVIIAVPSFKILRHAEKIPKTDLTIKVVGYQWYWHYIYPDHDNLEFDSVMISDENLKPNHKRLLDVDNRIVIPENATVRFLITAGDVIHSFAVPSLGFKIDAVPGRINETWTRVAKKGVYYGQCSELCGIHHGFMPIAIEVVSKEDFDNWIASKNKTAMNGKKPKLVAN.

3 consecutive transmembrane segments (helical) span residues 54–74 (IALICFLIVSCNCFASEPLPW), 96–116 (LLYISTAIVLFVAGLLGFVCI), and 133–153 (VLIEIIWTVIPIIILVIIAVP). Residues His235, Cys270, Cys274, and His278 each coordinate Cu cation.

Belongs to the cytochrome c oxidase subunit 2 family. Cu cation is required as a cofactor. It depends on heme as a cofactor.

It localises to the cell membrane. It catalyses the reaction 4 Fe(II)-[cytochrome c] + O2 + 8 H(+)(in) = 4 Fe(III)-[cytochrome c] + 2 H2O + 4 H(+)(out). Functionally, subunits I and II form the functional core of the enzyme complex. Electrons originating in cytochrome c are transferred via heme a and Cu(A) to the binuclear center formed by heme a3 and Cu(B). The protein is Probable cytochrome c oxidase subunit 2 (ctaC) of Rickettsia conorii (strain ATCC VR-613 / Malish 7).